A 430-amino-acid polypeptide reads, in one-letter code: Asparagine--tRNA ligase (430 aa).

The protein belongs to the class-II aminoacyl-tRNA synthetase family. Homodimer.

It is found in the cytoplasm. The catalysed reaction is tRNA(Asn) + L-asparagine + ATP = L-asparaginyl-tRNA(Asn) + AMP + diphosphate + H(+). In Bacillus licheniformis (strain ATCC 14580 / DSM 13 / JCM 2505 / CCUG 7422 / NBRC 12200 / NCIMB 9375 / NCTC 10341 / NRRL NRS-1264 / Gibson 46), this protein is Asparagine--tRNA ligase.